A 173-amino-acid polypeptide reads, in one-letter code: MASIPATVATVAQANMVAPFTGLKANAAFPVTKKVNDFSTLPSNGGRVQCMKVWPPLGKKKYETLSYLPDLTEVQLAKEVDYLLRNKWVPCLEFELEHGFVYRENARSPGYYDGRYWTMWKLPMFGCTDSAQVMKELQECKKEYPQAWIRIIGFDNVRQVQCISFIASKPGGF.

A chloroplast-targeting transit peptide spans Met-1–Gln-49.

Belongs to the RuBisCO small chain family. As to quaternary structure, heterohexadecamer of 8 large and 8 small subunits.

The protein localises to the plastid. Its subcellular location is the chloroplast. Functionally, ruBisCO catalyzes two reactions: the carboxylation of D-ribulose 1,5-bisphosphate, the primary event in carbon dioxide fixation, as well as the oxidative fragmentation of the pentose substrate. Both reactions occur simultaneously and in competition at the same active site. Although the small subunit is not catalytic it is essential for maximal activity. In Flaveria pringlei, this protein is Ribulose bisphosphate carboxylase small subunit, chloroplastic 1.